The primary structure comprises 440 residues: MQFTDTIYALSSGSPPAGVALIRVSGPATADALARLCGPLPPARVATLRTIRTRNSDILDSGLVLYFPGPASFTGEDCCELQVHGGRAVVSAILDELAAMDGLRHAEAGEFARRAFQNGKLDLVEVEGLADLIAAETEMQRRLAVEQSGGGQSALYAGWARRLTHARAMIEAELDFADEDDIPGSVSAAIWTDIGRLREEIDEHIARAGVAEIIRDGLKIVIAGEPNAGKSSLLNALAQRDIAIVTEIAGTTRDVLSVDLSLAGFSVKLFDTAGLRETDEVVEREGIRRARQVIADADLVLLLSEKPSDFRLDEWQPGKSVPVIRVATKVDRPMPRWKTSEADVFLSTRTGEGMDKLLAMLQAHLPDLAGNTALSMPSRRRHVDCLRQAGAALVRSMEARELELQAEQLRQAGDALGRITGRVDVEKLLDVIFSEFCIGK.

(6S)-5-formyl-5,6,7,8-tetrahydrofolate contacts are provided by arginine 23, glutamate 80, and lysine 120. Residues 217–366 (GLKIVIAGEP…LLAMLQAHLP (150 aa)) enclose the TrmE-type G domain. Asparagine 227 lines the K(+) pocket. GTP contacts are provided by residues 227-232 (NAGKSS), 246-252 (TEIAGTT), and 271-274 (DTAG). Mg(2+) is bound at residue serine 231. K(+) is bound by residues threonine 246, isoleucine 248, and threonine 251. Threonine 252 contributes to the Mg(2+) binding site. Lysine 440 is a binding site for (6S)-5-formyl-5,6,7,8-tetrahydrofolate.

The protein belongs to the TRAFAC class TrmE-Era-EngA-EngB-Septin-like GTPase superfamily. TrmE GTPase family. Homodimer. Heterotetramer of two MnmE and two MnmG subunits. K(+) serves as cofactor.

The protein localises to the cytoplasm. Its function is as follows. Exhibits a very high intrinsic GTPase hydrolysis rate. Involved in the addition of a carboxymethylaminomethyl (cmnm) group at the wobble position (U34) of certain tRNAs, forming tRNA-cmnm(5)s(2)U34. The polypeptide is tRNA modification GTPase MnmE (Sinorhizobium medicae (strain WSM419) (Ensifer medicae)).